The sequence spans 283 residues: uncharacterized protein (283 aa).

Helical transmembrane passes span 18 to 38 (VYDI…AKLI), 61 to 81 (VIYF…LGLD), and 94 to 114 (IVLG…IFLI).

It belongs to the MscS (TC 1.A.23) family.

Its subcellular location is the cell membrane. This is an uncharacterized protein from Archaeoglobus fulgidus (strain ATCC 49558 / DSM 4304 / JCM 9628 / NBRC 100126 / VC-16).